The primary structure comprises 2145 residues: Mediator of RNA polymerase II transcription subunit 12-like protein (2145 aa).

Positions 1-30 (MAAFGLLSYEQRPLKRPRLGPPDVYPQDPK) are disordered. Thr462 carries the phosphothreonine modification. Positions 1436–1455 (ELEKGQHLGSSSKKERDRQK) are enriched in basic and acidic residues. 3 disordered regions span residues 1436–1460 (ELEK…KSMS), 1721–1802 (RSYY…ISSQ), and 2029–2145 (DAVL…PSHF). The span at 1768 to 1777 (TKGRKRKTKS) shows a compositional bias: basic residues. Positions 2052 to 2069 (RQPQVRQQQRLLQMQQPQ) are enriched in low complexity. A compositionally biased stretch (pro residues) spans 2070–2079 (QPQPQQPPQP). Over residues 2089 to 2099 (TLGLQAMQPQQ) the composition is skewed to polar residues. A compositionally biased stretch (low complexity) spans 2104-2124 (RQGLQQTQQQQQTAALVRQLQ). Positions 2125 to 2136 (KQLSSNQPQQGV) are enriched in polar residues.

It belongs to the Mediator complex subunit 12 family. May be a component of the Mediator complex, which is known to be composed of MED1, MED4, MED6, MED7, MED8, MED9, MED10, MED11, MED12, MED13, MED13L, MED14, MED15, MED16, MED17, MED18, MED19, MED20, MED21, MED22, MED23, MED24, MED25, MED26, MED27, MED29, MED30, MED31, CCNC, CDK8 and CDC2L6/CDK11. The MED12, MED13, CCNC and CDK8 subunits form a distinct module termed the CDK8 module. Mediator containing the CDK8 module is less active than Mediator lacking this module in supporting transcriptional activation. Individual preparations of the Mediator complex lacking one or more distinct subunits have been variously termed ARC, CRSP, DRIP, PC2, SMCC and TRAP.

The protein localises to the nucleus. May be a component of the Mediator complex, a coactivator involved in the regulated transcription of nearly all RNA polymerase II-dependent genes. Mediator functions as a bridge to convey information from gene-specific regulatory proteins to the basal RNA polymerase II transcription machinery. Mediator is recruited to promoters by direct interactions with regulatory proteins and serves as a scaffold for the assembly of a functional preinitiation complex with RNA polymerase II and the general transcription factors. This is Mediator of RNA polymerase II transcription subunit 12-like protein (MED12L) from Homo sapiens (Human).